The primary structure comprises 447 residues: GTPase Der (447 aa).

EngA-type G domains lie at 3–167 and 181–354; these read PVIA…VQER and VKIA…AAAM. Residues 9 to 16, 56 to 60, 119 to 122, 187 to 194, 234 to 238, and 299 to 302 each bind GTP; these read GRPNVGKS, DTGGF, NKAE, DTAGL, and NKWD. Positions 355–439 constitute a KH-like domain; the sequence is IKLPTPQITR…PLRIEFRTNK (85 aa).

The protein belongs to the TRAFAC class TrmE-Era-EngA-EngB-Septin-like GTPase superfamily. EngA (Der) GTPase family. In terms of assembly, associates with the 50S ribosomal subunit.

GTPase that plays an essential role in the late steps of ribosome biogenesis. The chain is GTPase Der from Cupriavidus metallidurans (strain ATCC 43123 / DSM 2839 / NBRC 102507 / CH34) (Ralstonia metallidurans).